An 87-amino-acid polypeptide reads, in one-letter code: MANTKSAKKAIRVIAKKTAVNKDRRSRMRTFVRKVEEALASGDKTAAQEALRAAQPEIMRAAQKGVIHKNTASRKVSRFTQRVKALS.

This sequence belongs to the bacterial ribosomal protein bS20 family.

Binds directly to 16S ribosomal RNA. This is Small ribosomal subunit protein bS20 from Parvibaculum lavamentivorans (strain DS-1 / DSM 13023 / NCIMB 13966).